We begin with the raw amino-acid sequence, 75 residues long: CLAVATA3/ESR (CLE)-related protein 2 (75 aa).

Residues 1–22 form the signal peptide; that stretch reads MAKLSFTFCFLLFLLLSSIAAG. A disordered region spans residues 40–75; that stretch reads PSIEATSPTVEDDQAAGSHGKSPERLSPGGPDPQHH. Residues Pro-67 and Pro-70 each carry the hydroxyproline modification. An O-linked (Ara...) hydroxyproline glycan is attached at Pro-70.

This sequence belongs to the CLV3/ESR signal peptide family. Interacts with the extracellular leucine-rich repeat region of CLV1. The O-glycosylation (arabinosylation) of the hydroxyproline Pro-70 enhances binding affinity of the CLE2p peptide for its receptor. As to expression, mostly expressed in roots and seedlings, and, to a lower extent, in apex.

Its subcellular location is the secreted. The protein resides in the extracellular space. Functionally, extracellular signal peptide that regulates cell fate. May act with CLV1 as a ligand-receptor pair in a signal transduction pathway, coordinating growth between adjacent meristematic regions. In Arabidopsis thaliana (Mouse-ear cress), this protein is CLAVATA3/ESR (CLE)-related protein 2.